Reading from the N-terminus, the 672-residue chain is Transcription factor tau 91 kDa subunit (672 aa).

Positions 1–158 are required for DNA-binding; that stretch reads MAVIPAKKRG…SLGQKGRPIR (158 aa). Residues 6-18 constitute a DNA-binding region (a.T hook); sequence AKKRGRPRKSVVA. Disordered stretches follow at residues 24-45 and 67-156; these read SLASPVSENSGSKRPRRNASKK and VNNV…KGRP. A compositionally biased stretch (acidic residues) spans 71-100; sequence DDTDDDDFVLNDEGDGEESDNVEIEFENEL. Positions 159-672 are sufficient for interaction with TFC8; the sequence is LLKDLSSARD…AGLLTLEYLS (514 aa). C375 and C383 are joined by a disulfide.

As to quaternary structure, heterodimer with TFC8. Component of the TFIIIC complex composed of TFC1, TFC3, TFC4, TFC6, TFC7 and TFC8. The subunits are organized in two globular domains, tauA and tauB, connected by a proteolysis-sensitive and flexible linker. Interacts with TFC1, TFC3, TFC4 and directly with TFC8.

It is found in the nucleus. TFIIIC mediates tRNA and 5S RNA gene activation by binding to intragenic promoter elements. Upstream of the transcription start site, TFIIIC assembles the initiation complex TFIIIB-TFIIIC-tDNA, which is sufficient for RNA polymerase III recruitment and function. Part of the tauB domain of TFIIIC that binds boxB DNA promoter sites of tRNA and similar genes. Cooperates with TFC3 in DNA binding. The sequence is that of Transcription factor tau 91 kDa subunit (TFC6) from Saccharomyces cerevisiae (strain ATCC 204508 / S288c) (Baker's yeast).